The sequence spans 489 residues: Bridging integrator 2 (489 aa).

The BAR domain occupies 28-244 (VLQKLGKTVE…MSKLEKQHSN (217 aa)). A compositionally biased stretch (low complexity) spans 267–302 (QSCAASSPVSPVSPVSPVTSPTSPSATSEPESVSAT). The segment at 267-489 (QSCAASSPVS…ASGGLVGLFL (223 aa)) is disordered. S273 bears the Phosphoserine mark. Over residues 311 to 331 (GGEDSCESQESLKDEEADEAQ) the composition is skewed to acidic residues. At S357 the chain carries Phosphoserine. The span at 358-368 (QEEALSSSAQS) shows a compositional bias: low complexity. Phosphoserine is present on residues S380, S392, S420, S422, S424, S430, S435, S439, and S443.

Homodimer. Interacts with BIN1. Interacts with ARHGEF6 (via SH3 domain), ARHGEF7 (via SH3 domain), SH3GL1, SH3GL2 and SH3GL3. Identified in a complex with ARHGEF6 and GIT2.

The protein resides in the cytoplasm. It localises to the cell projection. It is found in the podosome membrane. Its subcellular location is the cell cortex. The protein localises to the phagocytic cup. Functionally, promotes cell motility and migration, probably via its interaction with the cell membrane and with podosome proteins that mediate interaction with the cytoskeleton. Modulates membrane curvature and mediates membrane tubulation. Inhibits phagocytosis. Plays a role in podosome formation. In Mus musculus (Mouse), this protein is Bridging integrator 2 (Bin2).